A 472-amino-acid chain; its full sequence is MVAVRAPRRKRASATDLYKTCKAAGTCPPDVIPKIEGSTLADKILQWSGLGIFLGGLGIGTGTGSGGRTGYIPLGGGGRPSVVDIGPTRPPIIIEPVGPTEPSIVTLVEESSIIQSGAPIPTFSGGNGFELTTSSATTPAVLDITPSAGTVHVTSTNIQNPLYIEPPIDIPQAGEASGHIFTTTSTAGTHSYEEIPMEVFASTNGTGLEPISSTPIPGIQRVSAPRLYSKAYQQVKVTDPNFIGNPSTFVTFDNPAYEPIDETLTYASSSTVAPDPDFLDIIALHRPALTSRKGTVRYSRLGQKATMKTRSGKQIGATVHYYHDISPIQSFAEHEEIELQPLHTSTHSSAPLFDIYADPDTVPSIHTPRMSYSPTTLPVPRYASNVFSSINTSTTNVTVPLSTSFELPVYSGSDIYTPTSSPTWPSLPPPPTTNLPAIVVHGDNYYLWPYIYLIHKRRKRMPYFFSDGFVAY.

The short motif at 1–12 (MVAVRAPRRKRA) is the Nuclear localization signal element. An intrachain disulfide couples Cys21 to Cys27. The Nuclear localization signal signature appears at 453 to 461 (LIHKRRKRM).

This sequence belongs to the papillomaviridae L2 protein family. In terms of assembly, interacts with major capsid protein L1. Interacts with E2; this interaction inhibits E2 transcriptional activity but not the DNA replication function E2. Interacts with host GADD45GIP1. Interacts with host HSPA8; this interaction is required for L2 nuclear translocation. Interacts with host importins KPNB2 and KPNB3. Forms a complex with importin alpha2-beta1 heterodimers via interaction with the importin alpha2 adapter. Interacts with host DYNLT1; this interaction is essential for virus intracellular transport during entry. Interacts (via C-terminus) with host retromer subunits VPS35 and VPS29. Post-translationally, highly phosphorylated.

The protein resides in the virion. The protein localises to the host nucleus. It localises to the host early endosome. Its subcellular location is the host Golgi apparatus. Its function is as follows. Minor protein of the capsid that localizes along the inner surface of the virion, within the central cavities beneath the L1 pentamers. Plays a role in capsid stabilization through interaction with the major capsid protein L1. Once the virion enters the host cell, L2 escorts the genomic DNA into the nucleus by promoting escape from the endosomal compartments and traffic through the host Golgi network. Mechanistically, the C-terminus of L2 possesses a cell-penetrating peptide that protudes from the host endosome, interacts with host cytoplasmic retromer cargo and thereby mediates the capsid delivery to the host trans-Golgi network. Plays a role through its interaction with host dynein in the intracellular microtubule-dependent transport of viral capsid toward the nucleus. Mediates the viral genome import into the nucleus through binding to host importins. Once within the nucleus, L2 localizes viral genomes to host PML bodies in order to activate early gene expression for establishment of infection. Later on, promotes late gene expression by interacting with the viral E2 protein and by inhibiting its transcriptional activation functions. During virion assembly, encapsidates the genome by direct interaction with the viral DNA. In Homo sapiens (Human), this protein is Minor capsid protein L2.